The primary structure comprises 182 residues: Putative CTD phosphatase-like protein 355R (182 aa).

The region spanning M1–H180 is the FCP1 homology domain.

Belongs to the IIV-6 355R family.

Its function is as follows. May function as a phosphatase. The polypeptide is Putative CTD phosphatase-like protein 355R (Invertebrate iridescent virus 6 (IIV-6)).